Consider the following 387-residue polypeptide: Succinyl-diaminopimelate desuccinylase (387 aa).

His74 is a Zn(2+) binding site. Asp76 is an active-site residue. Residue Asp107 coordinates Zn(2+). The Proton acceptor role is filled by Glu142. Residues Glu143, Glu171, and His360 each coordinate Zn(2+).

This sequence belongs to the peptidase M20A family. DapE subfamily. Homodimer. Zn(2+) serves as cofactor. It depends on Co(2+) as a cofactor.

It carries out the reaction N-succinyl-(2S,6S)-2,6-diaminopimelate + H2O = (2S,6S)-2,6-diaminopimelate + succinate. It participates in amino-acid biosynthesis; L-lysine biosynthesis via DAP pathway; LL-2,6-diaminopimelate from (S)-tetrahydrodipicolinate (succinylase route): step 3/3. Functionally, catalyzes the hydrolysis of N-succinyl-L,L-diaminopimelic acid (SDAP), forming succinate and LL-2,6-diaminopimelate (DAP), an intermediate involved in the bacterial biosynthesis of lysine and meso-diaminopimelic acid, an essential component of bacterial cell walls. This Rhodopseudomonas palustris (strain ATCC BAA-98 / CGA009) protein is Succinyl-diaminopimelate desuccinylase.